The following is a 322-amino-acid chain: ADP,ATP carrier protein (322 aa).

Solcar repeat units lie at residues 25–118 (STFF…FKKM), 130–222 (KWFA…LKPV), and 230–316 (GNFL…VQLL). 5 consecutive transmembrane segments (helical) span residues 27–54 (FFFD…VKLL), 95–119 (TANV…KKMF), 128–148 (YAKW…ASLL), 198–219 (FGPS…YDTL), and 233–253 (LASF…SYPL). ADP-binding residues include arginine 100 and lysine 112. Arginine 257 lines the ADP pocket. The segment at 257 to 262 (RRRMMM) is important for transport activity. The Nucleotide carrier signature motif motif lies at 257–262 (RRRMMM). The helical transmembrane segment at 293–313 (AGANILRGVAGAGVLSIYDQV) threads the bilayer.

This sequence belongs to the mitochondrial carrier (TC 2.A.29) family. Monomer.

It localises to the mitochondrion inner membrane. The enzyme catalyses ADP(in) + ATP(out) = ADP(out) + ATP(in). The matrix-open state (m-state) is inhibited by the membrane-permeable bongkrekic acid (BKA). The cytoplasmic-open state (c-state) is inhibited by the membrane-impermeable toxic inhibitor carboxyatractyloside (CATR). In terms of biological role, ADP:ATP antiporter that mediates import of ADP into the mitochondrial matrix for ATP synthesis, and export of ATP out to fuel the cell. Cycles between the cytoplasmic-open state (c-state) and the matrix-open state (m-state): operates by the alternating access mechanism with a single substrate-binding site intermittently exposed to either the cytosolic (c-state) or matrix (m-state) side of the inner mitochondrial membrane. In Schizosaccharomyces pombe (strain 972 / ATCC 24843) (Fission yeast), this protein is ADP,ATP carrier protein (anc1).